The primary structure comprises 105 residues: Blood plasma apolipoprotein LAL1 (105 aa).

An N-terminal signal peptide occupies residues 1-21 (MKLHVAALATLAVVCILAAGS). The propeptide occupies 22 to 29 (EAAPKAMS).

Plasma.

It localises to the secreted. The sequence is that of Blood plasma apolipoprotein LAL1 from Petromyzon marinus (Sea lamprey).